A 359-amino-acid polypeptide reads, in one-letter code: Type-1 angiotensin II receptor B (359 aa).

At 1 to 25 (MTLNSSTEDGIKRIQDDCPKAGRHN) the chain is on the extracellular side. N-linked (GlcNAc...) asparagine glycosylation occurs at Asn4. Angiotensin II is bound by residues Gln15 and Asp17. 2 disulfides stabilise this stretch: Cys18–Cys274 and Cys101–Cys180. Residues 26–55 (YIFVMIPTLYSIIFVVGIFGNSLVVIVIYF) form a helical membrane-spanning segment. The Cytoplasmic portion of the chain corresponds to 56 to 61 (YMKLKT). Residues 62-89 (VASVFLLNLALADLCFLLTLPLWAVYTA) form a helical membrane-spanning segment. Over 90–98 (MEYRWPFGN) the chain is Extracellular. A helical membrane pass occupies residues 99–125 (HLCKIASASVSFNLYASVFLLTCLSID). The Cytoplasmic portion of the chain corresponds to 126-141 (RYLAIVHPMKSRLRRT). A helical membrane pass occupies residues 142 to 165 (MLVAKVTCIIIWLMAGLASLPAVI). Topologically, residues 166 to 190 (YRNVYFIENTNITVCAFHYESQNST) are extracellular. Arg167 is a binding site for angiotensin II. The N-linked (GlcNAc...) asparagine glycan is linked to Asn176. 3 residues coordinate angiotensin II: Phe182, His183, and Tyr184. Asn188 carries an N-linked (GlcNAc...) asparagine glycan. The helical transmembrane segment at 191–216 (LPIGLGLTKNILGFVFPFLIILTSYT) threads the bilayer. Lys199 is an angiotensin II binding site. Over 217–239 (LIWKALKKAYKIQKNTPRNDDIF) the chain is Cytoplasmic. A helical transmembrane segment spans residues 240–268 (RIIMAIVLFFFFSWVPHQIFTFLDVLIQL). At 269-278 (GIIRDCEIAD) the chain is on the extracellular side. The helical transmembrane segment at 279 to 304 (IVDTAMPITICIAYFNNCLNPLFYGF) threads the bilayer. Over 305-359 (LGKKFKKYFLQLLKYIPPTAKSHAGLSTKMSTLSYRPSDNMSSSAKKSASFFEVE) the chain is Cytoplasmic. The segment at 339–359 (YRPSDNMSSSAKKSASFFEVE) is disordered. Residues 346-359 (SSSAKKSASFFEVE) are compositionally biased toward low complexity.

The protein belongs to the G-protein coupled receptor 1 family. Interacts with MAS1. Interacts with ARRB1. Interacts with FLNA (via filamin repeat 21); increases PKA-mediated phosphorylation of FLNA. In terms of processing, C-terminal Ser or Thr residues may be phosphorylated. Is expressed in the liver, kidney, aorta, lung, uterus, ovary, spleen, heart, and vascular smooth muscle cell. Expressed most abundantly in the adrenal gland.

It is found in the cell membrane. Its function is as follows. Receptor for angiotensin II, a vasoconstricting peptide, which acts as a key regulator of blood pressure and sodium retention by the kidney. The activated receptor in turn couples to G-alpha proteins G(q) (GNAQ, GNA11, GNA14 or GNA15) and thus activates phospholipase C and increases the cytosolic Ca(2+) concentrations, which in turn triggers cellular responses such as stimulation of protein kinase C. This chain is Type-1 angiotensin II receptor B (Agtr1b), found in Rattus norvegicus (Rat).